The sequence spans 2171 residues: Mediator of DNA damage checkpoint protein 1 (2171 aa).

The span at 1–19 (MEDTQAIDWDVEEEEETEQ) shows a compositional bias: acidic residues. The segment at 1–22 (MEDTQAIDWDVEEEEETEQSSE) is disordered. An interaction with CHEK2 region spans residues 1–150 (MEDTQAIDWD…SRGPLTVEET (150 aa)). An interaction with the MRN complex region spans residues 2-220 (EDTQAIDWDV…PFAFNLNSDT (219 aa)). The residue at position 4 (Thr-4) is a Phosphothreonine. In terms of domain architecture, FHA spans 54–105 (NVVGRMPDCSVALPFPSISKQHAEIEILAWDKAPILRDCGSLNGTQILRPPK). Ser-108 is subject to Phosphoserine. Residues 145–568 (LTVEETPRVQ…PAKLLVVSLE (424 aa)) are required for nuclear localization (NLS1). Thr-146 is subject to Phosphothreonine. Phosphoserine occurs at positions 168, 176, 196, and 218. Disordered regions lie at residues 185-248 (RTTS…AKQS) and 261-317 (DQPL…AEVH). At Thr-220 the chain carries Phosphothreonine. Basic and acidic residues predominate over residues 261–278 (DQPLVKERDDDTKVKRGA). Phosphoserine is present on Ser-299. Position 301 is a phosphothreonine (Thr-301). Positions 306 to 317 (DSRPPGRPAEVH) are enriched in basic and acidic residues. Ser-329 carries the phosphoserine modification. Residue Thr-331 is modified to Phosphothreonine. A disordered region spans residues 355 to 387 (GVGTRGPGAPGLAHLQESQAGSDTDVEEGKAPQ). A phosphoserine mark is found at Ser-372 and Ser-376. Phosphothreonine is present on Thr-378. 3 positions are modified to phosphoserine: Ser-394, Ser-397, and Ser-402. Residue Thr-404 is modified to Phosphothreonine. Ser-411 is modified (phosphoserine). Disordered stretches follow at residues 443-469 (QRSQ…NREA) and 481-522 (VRAH…VDIN). Thr-449 is subject to Phosphothreonine. Ser-453 is subject to Phosphoserine. Phosphothreonine is present on Thr-455. Residues Ser-485, Ser-495, Ser-498, Ser-504, Ser-505, and Ser-513 each carry the phosphoserine modification. Polar residues predominate over residues 513–522 (SQASTTVDIN). Position 523 is a phosphothreonine (Thr-523). At Ser-590 the chain carries Phosphoserine. Lys-616 participates in a covalent cross-link: Glycyl lysine isopeptide (Lys-Gly) (interchain with G-Cter in SUMO1); alternate. Residue Lys-616 forms a Glycyl lysine isopeptide (Lys-Gly) (interchain with G-Cter in SUMO2); alternate linkage. 2 disordered regions span residues 653–689 (DTLG…DNYG) and 780–1969 (SPPR…TKLN). Basic and acidic residues predominate over residues 671 to 685 (GREREQHVGGTKDSE). Residues Ser-780 and Ser-793 each carry the phosphoserine modification. Residue Lys-812 is modified to N6-acetyllysine. 4 stretches are compositionally biased toward basic and acidic residues: residues 819–844 (ETAE…ERQT), 851–862 (ELTKGKQDREQK), 868–905 (DTQR…EKQV), and 914–951 (AFER…RGEP). A phosphoserine mark is found at Ser-955 and Ser-998. The segment covering 955–964 (SQDQKGQASS) has biased composition (polar residues). Residues 1016–1031 (KASRIRAAEKVSRGDQ) are compositionally biased toward basic and acidic residues. The residue at position 1033 (Ser-1033) is a Phosphoserine. Over residues 1040-1051 (PTVPEAPAPPQK) the composition is skewed to pro residues. Ser-1068 and Ser-1086 each carry phosphoserine. The span at 1103-1113 (PKPKIRTRKSS) shows a compositional bias: basic residues. Polar residues-rich tracts occupy residues 1129–1157 (PSTS…SVKT) and 1170–1187 (PCTS…SQVT). The interaction with the PRKDC complex stretch occupies residues 1148-1692 (SRTNRSSVKT…TNRSSVKTPE (545 aa)). At Thr-1157 the chain carries Phosphothreonine. Thr-1198 is modified (phosphothreonine). A compositionally biased stretch (polar residues) spans 1210-1227 (QPSTSTDRPVTSEPTSHA). A Phosphoserine modification is found at Ser-1235. Phosphothreonine is present on Thr-1239. Residues 1251 to 1268 (QPSTSTDQPVTSEPTYQA) show a composition bias toward polar residues. A phosphothreonine mark is found at Thr-1280 and Thr-1302. The segment covering 1306-1318 (TSRTTRSRTNMSS) has biased composition (low complexity). Composition is skewed to polar residues over residues 1334–1350 (PSTS…TSRA) and 1375–1403 (PSTS…SVKT). The segment covering 1429–1441 (TSRTTRSRTNMSS) has biased composition (low complexity). The segment covering 1457 to 1473 (PSTSTEQPVTPEPTSRA) has biased composition (polar residues). Residues Ser-1481 and Ser-1482 each carry the phosphoserine modification. At Lys-1484 the chain carries N6-acetyllysine. Thr-1485 is subject to Phosphothreonine. A Glycyl lysine isopeptide (Lys-Gly) (interchain with G-Cter in SUMO1); alternate cross-link involves residue Lys-1495. Lys-1495 participates in a covalent cross-link: Glycyl lysine isopeptide (Lys-Gly) (interchain with G-Cter in SUMO2); alternate. Polar residues-rich tracts occupy residues 1498 to 1526 (PSTS…SVKT), 1538 to 1557 (QPST…QVTR), and 1580 to 1596 (ASAS…TSRT). A phosphothreonine mark is found at Thr-1507 and Thr-1548. Phosphothreonine occurs at positions 1615 and 1630. Composition is skewed to polar residues over residues 1620–1649 (QPST…SVKT) and 1661–1678 (QPST…TSRA). Ser-1646 is subject to Phosphoserine. 2 positions are modified to phosphothreonine: Thr-1649 and Thr-1671. Ser-1686 is subject to Phosphoserine. Position 1690 is a phosphothreonine (Thr-1690). Residues 1693 to 1702 (PVVPTAPEPH) are compositionally biased toward pro residues. Positions 1706-1718 (STDQPVTPKLTSR) are enriched in polar residues. 3 positions are modified to phosphothreonine: Thr-1712, Thr-1746, and Thr-1753. A compositionally biased stretch (polar residues) spans 1760–1771 (GGQSKTLRSSTV). At Ser-1763 the chain carries Phosphoserine. The residue at position 1779 (Thr-1779) is a Phosphothreonine. Over residues 1780-1801 (PEFQSPVTTDQPISPEPITQPS) the composition is skewed to polar residues. The required for nuclear localization (NLS2) stretch occupies residues 1780–2171 (PEFQSPVTTD…VLSPLEMSST (392 aa)). A phosphoserine mark is found at Ser-1784 and Ser-1793. A Glycyl lysine isopeptide (Lys-Gly) (interchain with G-Cter in SUMO2) cross-link involves residue Lys-1822. Ser-1857 is modified (phosphoserine). A Glycyl lysine isopeptide (Lys-Gly) (interchain with G-Cter in SUMO2) cross-link involves residue Lys-1872. Thr-1882 carries the post-translational modification Phosphothreonine. Ser-1902 is subject to Phosphoserine. Positions 1905-1918 (HQKQPQRGEVSQKT) are enriched in polar residues. Lys-1922 participates in a covalent cross-link: Glycyl lysine isopeptide (Lys-Gly) (interchain with G-Cter in SUMO1); alternate. Lys-1922 is covalently cross-linked (Glycyl lysine isopeptide (Lys-Gly) (interchain with G-Cter in SUMO2); alternate). Positions 1929–1939 (AEKPGKEEDVV) are enriched in basic and acidic residues. Thr-1940 carries the post-translational modification Phosphothreonine. BRCT domains lie at 1974-2052 (APKV…EYVV) and 2073-2164 (RERR…FVLS). Arg-2025 carries the post-translational modification Omega-N-methylarginine.

As to quaternary structure, homodimer. Interacts with H2AX, which requires phosphorylation of H2AX on 'Ser-139'. Interacts with the MRN complex, composed of MRE11, RAD50, and NBN. Interacts with CHEK2, which requires ATM-mediated phosphorylation of 'Thr-68' within the FHA domain of CHEK2. Interacts constitutively with the BRCA1-BARD1 complex, SMC1A and TP53BP1. Interacts with ATM and FANCD2, and these interactions are reduced upon DNA damage. Also interacts with the PRKDC complex, composed of XRCC6/KU70, XRCC5/KU80 and PRKDC/XRCC7. This interaction may be required for PRKDC autophosphorylation, which is essential for DNA double strand break (DSB) repair. When phosphorylated by ATM, interacts with RNF8 (via FHA domain). Interacts with CEP164. When phosphorylated, interacts with APTX (via FHA-like domain). Interacts (when phosphorylated) with TOPBP1; promoting TOPBP1 localization to DNA damage sites during mitosis. Interacts (when phosphorylated) with NBN; promoting NBN and MRN complex localization to DNA damage sites. Phosphorylated upon exposure to ionizing radiation (IR), ultraviolet radiation (UV), and hydroxyurea (HU). Phosphorylation in response to IR requires ATM, NBN, and possibly CHEK2. Also phosphorylated during the G2/M phase of the cell cycle and during activation of the mitotic spindle checkpoint. Phosphorylation at Thr-4 by ATM stabilizes and enhances homodimerization via the FHA domain. Phosphorylated at Ser-168 and Ser-196 by CK2 in response to DNA damage during mitosis, promoting interaction with TOPBP1. Phosphorylated by CK2 in response to DNA damage, promoting interaction with NBN and recruitment of the MRN complex to DNA damage sites. Post-translationally, sumoylation at Lys-1922 by PIAS4 following DNA damage promotes ubiquitin-mediated degradation. In terms of processing, ubiquitinated by RNF4, leading to proteasomal degradation; undergoes 'Lys-48'-linked polyubiquitination.

Its subcellular location is the nucleus. It is found in the chromosome. Its function is as follows. Histone reader protein required for checkpoint-mediated cell cycle arrest in response to DNA damage within both the S phase and G2/M phases of the cell cycle. Specifically recognizes and binds histone H2AX phosphorylated at 'Ser-139', a marker of DNA damage, serving as a scaffold for the recruitment of DNA repair and signal transduction proteins to discrete foci of DNA damage sites. Also required for downstream events subsequent to the recruitment of these proteins. These include phosphorylation and activation of the ATM, CHEK1 and CHEK2 kinases, and stabilization of TP53/p53 and apoptosis. ATM and CHEK2 may also be activated independently by a parallel pathway mediated by TP53BP1. Required for chromosomal stability during mitosis by promoting recruitment of TOPBP1 to DNA double strand breaks (DSBs): TOPBP1 forms filamentous assemblies that bridge MDC1 and tether broken chromosomes during mitosis. Required for the repair of DSBs via homologous recombination by promoting recruitment of NBN component of the MRN complex to DSBs. This is Mediator of DNA damage checkpoint protein 1 (MDC1) from Pan troglodytes (Chimpanzee).